We begin with the raw amino-acid sequence, 520 residues long: GMP synthase [glutamine-hydrolyzing] (520 aa).

The Glutamine amidotransferase type-1 domain occupies 12 to 205 (KIIVLDYGSQ…AISICGARGD (194 aa)). Cys-89 functions as the Nucleophile in the catalytic mechanism. Active-site residues include His-179 and Glu-181. Residues 206-395 (WSMDNFIDME…LGMPEEIVWR (190 aa)) form the GMPS ATP-PPase domain. Residue 233 to 239 (SGGVDSS) participates in ATP binding.

As to quaternary structure, homodimer.

It carries out the reaction XMP + L-glutamine + ATP + H2O = GMP + L-glutamate + AMP + diphosphate + 2 H(+). It participates in purine metabolism; GMP biosynthesis; GMP from XMP (L-Gln route): step 1/1. Catalyzes the synthesis of GMP from XMP. This chain is GMP synthase [glutamine-hydrolyzing], found in Streptococcus pyogenes serotype M6 (strain ATCC BAA-946 / MGAS10394).